A 126-amino-acid polypeptide reads, in one-letter code: Aspartate 1-decarboxylase (126 aa).

Ser-25 (schiff-base intermediate with substrate; via pyruvic acid) is an active-site residue. Ser-25 carries the pyruvic acid (Ser) modification. Thr-57 is a substrate binding site. The active-site Proton donor is Tyr-58. 73 to 75 (GGA) contacts substrate.

This sequence belongs to the PanD family. Heterooctamer of four alpha and four beta subunits. It depends on pyruvate as a cofactor. In terms of processing, is synthesized initially as an inactive proenzyme, which is activated by self-cleavage at a specific serine bond to produce a beta-subunit with a hydroxyl group at its C-terminus and an alpha-subunit with a pyruvoyl group at its N-terminus.

It is found in the cytoplasm. The catalysed reaction is L-aspartate + H(+) = beta-alanine + CO2. It functions in the pathway cofactor biosynthesis; (R)-pantothenate biosynthesis; beta-alanine from L-aspartate: step 1/1. Functionally, catalyzes the pyruvoyl-dependent decarboxylation of aspartate to produce beta-alanine. The chain is Aspartate 1-decarboxylase from Acinetobacter baumannii (strain AB307-0294).